Reading from the N-terminus, the 340-residue chain is Phosphoribosylformylglycinamidine cyclo-ligase (340 aa).

This sequence belongs to the AIR synthase family.

The protein resides in the cytoplasm. It carries out the reaction 2-formamido-N(1)-(5-O-phospho-beta-D-ribosyl)acetamidine + ATP = 5-amino-1-(5-phospho-beta-D-ribosyl)imidazole + ADP + phosphate + H(+). It participates in purine metabolism; IMP biosynthesis via de novo pathway; 5-amino-1-(5-phospho-D-ribosyl)imidazole from N(2)-formyl-N(1)-(5-phospho-D-ribosyl)glycinamide: step 2/2. The protein is Phosphoribosylformylglycinamidine cyclo-ligase of Streptococcus mutans serotype c (strain ATCC 700610 / UA159).